A 286-amino-acid polypeptide reads, in one-letter code: Protein GrpE (286 aa).

Disordered stretches follow at residues M1–A51 and V260–T286. Low complexity-rich tracts occupy residues Q39 to T50 and T271 to T286.

The protein belongs to the GrpE family. Homodimer.

It is found in the cytoplasm. In terms of biological role, participates actively in the response to hyperosmotic and heat shock by preventing the aggregation of stress-denatured proteins, in association with DnaK and GrpE. It is the nucleotide exchange factor for DnaK and may function as a thermosensor. Unfolded proteins bind initially to DnaJ; upon interaction with the DnaJ-bound protein, DnaK hydrolyzes its bound ATP, resulting in the formation of a stable complex. GrpE releases ADP from DnaK; ATP binding to DnaK triggers the release of the substrate protein, thus completing the reaction cycle. Several rounds of ATP-dependent interactions between DnaJ, DnaK and GrpE are required for fully efficient folding. This chain is Protein GrpE, found in Gloeothece citriformis (strain PCC 7424) (Cyanothece sp. (strain PCC 7424)).